A 184-amino-acid polypeptide reads, in one-letter code: NADH-quinone oxidoreductase subunit B (184 aa).

The [4Fe-4S] cluster site is built by cysteine 37, cysteine 38, cysteine 103, and cysteine 132. Positions 164 to 184 are disordered; that stretch reads HEREEAAKHALPTHSMKGLLR.

It belongs to the complex I 20 kDa subunit family. NDH-1 is composed of 14 different subunits. Subunits NuoB, C, D, E, F, and G constitute the peripheral sector of the complex. The cofactor is [4Fe-4S] cluster.

It localises to the cell membrane. It catalyses the reaction a quinone + NADH + 5 H(+)(in) = a quinol + NAD(+) + 4 H(+)(out). Functionally, NDH-1 shuttles electrons from NADH, via FMN and iron-sulfur (Fe-S) centers, to quinones in the respiratory chain. The immediate electron acceptor for the enzyme in this species is believed to be a menaquinone. Couples the redox reaction to proton translocation (for every two electrons transferred, four hydrogen ions are translocated across the cytoplasmic membrane), and thus conserves the redox energy in a proton gradient. In Acidothermus cellulolyticus (strain ATCC 43068 / DSM 8971 / 11B), this protein is NADH-quinone oxidoreductase subunit B.